The primary structure comprises 44 residues: pyr operon leader peptide (44 aa).

This Escherichia coli O157:H7 protein is pyr operon leader peptide (pyrL).